Consider the following 259-residue polypeptide: Probable metal transport system ATP-binding protein TC_0339 (259 aa).

In terms of domain architecture, ABC transporter spans 9 to 241 (WAVDDLCVNY…AIFQAYGCEL (233 aa)). 41–48 (GPNGAGKS) contacts ATP.

It belongs to the ABC transporter superfamily.

The protein resides in the cell inner membrane. In terms of biological role, part of an ATP-driven transport system TC_0338/TC_0339/TC_0341/TC_0342 for a metal. Probably responsible for energy coupling to the transport system. The protein is Probable metal transport system ATP-binding protein TC_0339 of Chlamydia muridarum (strain MoPn / Nigg).